Consider the following 188-residue polypeptide: Small ribosomal subunit protein uS7 (188 aa).

It belongs to the universal ribosomal protein uS7 family. Part of the 30S ribosomal subunit.

In terms of biological role, one of the primary rRNA binding proteins, it binds directly to 16S rRNA where it nucleates assembly of the head domain of the 30S subunit. Is located at the subunit interface close to the decoding center. The sequence is that of Small ribosomal subunit protein uS7 from Methanococcus maripaludis (strain DSM 14266 / JCM 13030 / NBRC 101832 / S2 / LL).